Consider the following 36-residue polypeptide: Kappa-actitoxin-Avd6a (36 aa).

In terms of domain architecture, ShKT spans 2 to 36 (CKDNFAAATCKHVKENKNCGSQKYATNCAKTCGKC). 3 cysteine pairs are disulfide-bonded: Cys2–Cys36, Cys11–Cys29, and Cys20–Cys33. The crucial for binding to potassium channels stretch occupies residues 24 to 25 (KY).

It belongs to the sea anemone type 1 potassium channel toxin family. Type 1b subfamily.

It is found in the secreted. The protein localises to the nematocyst. Blocks voltage-gated potassium channels Kv1.2/KCNA2 (IC(50)=140 nM). In Anemonia sulcata (Mediterranean snakelocks sea anemone), this protein is Kappa-actitoxin-Avd6a.